The following is a 222-amino-acid chain: Deoxyribose-phosphate aldolase (222 aa).

Asp90 (proton donor/acceptor) is an active-site residue. Lys152 acts as the Schiff-base intermediate with acetaldehyde in catalysis. Lys181 serves as the catalytic Proton donor/acceptor.

The protein belongs to the DeoC/FbaB aldolase family. DeoC type 1 subfamily.

The protein resides in the cytoplasm. The catalysed reaction is 2-deoxy-D-ribose 5-phosphate = D-glyceraldehyde 3-phosphate + acetaldehyde. It participates in carbohydrate degradation; 2-deoxy-D-ribose 1-phosphate degradation; D-glyceraldehyde 3-phosphate and acetaldehyde from 2-deoxy-alpha-D-ribose 1-phosphate: step 2/2. Catalyzes a reversible aldol reaction between acetaldehyde and D-glyceraldehyde 3-phosphate to generate 2-deoxy-D-ribose 5-phosphate. This Pectobacterium atrosepticum (strain SCRI 1043 / ATCC BAA-672) (Erwinia carotovora subsp. atroseptica) protein is Deoxyribose-phosphate aldolase.